The following is a 303-amino-acid chain: Diaminopimelate epimerase (303 aa).

Substrate is bound by residues asparagine 15, glutamine 47, and asparagine 67. Cysteine 76 serves as the catalytic Proton donor. Substrate contacts are provided by residues 77–78 (GN), asparagine 163, asparagine 197, and 215–216 (ER). The active-site Proton acceptor is the cysteine 224. 225–226 (GS) contributes to the substrate binding site. The tract at residues 279 to 303 (DPATGEWSRDTQGLQGSGNADRGTA) is disordered.

Belongs to the diaminopimelate epimerase family. In terms of assembly, homodimer.

The protein localises to the cytoplasm. The catalysed reaction is (2S,6S)-2,6-diaminopimelate = meso-2,6-diaminopimelate. Its pathway is amino-acid biosynthesis; L-lysine biosynthesis via DAP pathway; DL-2,6-diaminopimelate from LL-2,6-diaminopimelate: step 1/1. Catalyzes the stereoinversion of LL-2,6-diaminopimelate (L,L-DAP) to meso-diaminopimelate (meso-DAP), a precursor of L-lysine and an essential component of the bacterial peptidoglycan. This chain is Diaminopimelate epimerase, found in Brucella canis (strain ATCC 23365 / NCTC 10854 / RM-666).